The sequence spans 374 residues: Cell wall integrity and stress response component 1 (374 aa).

Positions 1–29 (MVFLNSSPFKGRLLFFVYLLIISTRLVAA) are cleaved as a signal peptide. Over 30–292 (DMNTQYGCYL…SNHTSLNAGA (263 aa)) the chain is Extracellular. Residues 31–119 (MNTQYGCYLV…DLYWSVYLTG (89 aa)) form the WSC domain. A disordered region spans residues 132 to 236 (VSSTTSSSSS…SSSSSSRPSS (105 aa)). N-linked (GlcNAc...) asparagine glycosylation is found at Asn278 and Asn284. The chain crosses the membrane as a helical span at residues 293-313 (IVGIVIGCVAFAVVMALCIFL). Residues 314-374 (YFYFRRFKIR…RKILRVTNLN (61 aa)) lie on the Cytoplasmic side of the membrane. Position 354 is a phosphoserine (Ser354).

In terms of processing, O-mannosylated.

The protein localises to the membrane. This Schizosaccharomyces pombe (strain 972 / ATCC 24843) (Fission yeast) protein is Cell wall integrity and stress response component 1 (wsc1).